A 156-amino-acid chain; its full sequence is ATP synthase subunit b (156 aa).

The helical transmembrane segment at 7 to 27 (LIGQLIAFAIFVAFCMKFVWP) threads the bilayer.

It belongs to the ATPase B chain family. F-type ATPases have 2 components, F(1) - the catalytic core - and F(0) - the membrane proton channel. F(1) has five subunits: alpha(3), beta(3), gamma(1), delta(1), epsilon(1). F(0) has three main subunits: a(1), b(2) and c(10-14). The alpha and beta chains form an alternating ring which encloses part of the gamma chain. F(1) is attached to F(0) by a central stalk formed by the gamma and epsilon chains, while a peripheral stalk is formed by the delta and b chains.

The protein resides in the cell inner membrane. Functionally, f(1)F(0) ATP synthase produces ATP from ADP in the presence of a proton or sodium gradient. F-type ATPases consist of two structural domains, F(1) containing the extramembraneous catalytic core and F(0) containing the membrane proton channel, linked together by a central stalk and a peripheral stalk. During catalysis, ATP synthesis in the catalytic domain of F(1) is coupled via a rotary mechanism of the central stalk subunits to proton translocation. Its function is as follows. Component of the F(0) channel, it forms part of the peripheral stalk, linking F(1) to F(0). The chain is ATP synthase subunit b from Pasteurella multocida (strain Pm70).